The sequence spans 447 residues: Probable 7-dehydrocholesterol reductase (447 aa).

Transmembrane regions (helical) follow at residues 24–44 (LTTA…YLIT), 71–91 (IPSF…FQLI), 102–124 (FVPH…LVYY), 133–153 (IITH…PTII), 157–177 (WGSI…LAYF), 244–264 (YVSN…VDFF), 281–301 (FGWM…TLQA), and 309–329 (IDLS…GYII). NADP(+) is bound by residues lysine 337, arginine 341, isoleucine 367, tryptophan 372, and 379 to 380 (NY). Residues 393-413 (ACGFSHFIPYFYCVYMTILLV) traverse the membrane as a helical segment. NADP(+) is bound by residues aspartate 419, 423–427 (CSRKY), and tyrosine 434.

Belongs to the ERG4/ERG24 family.

It localises to the membrane. It catalyses the reaction cholesterol + NADP(+) = 7-dehydrocholesterol + NADPH + H(+). Its pathway is steroid biosynthesis; cholesterol biosynthesis. In terms of biological role, catalyzes the last step of the cholesterol synthesis pathway, which transforms cholesta-5,7-dien-3beta-ol (7-dehydrocholesterol,7-DHC) into cholesterol by reducing the C7-C8 double bond of its sterol core. The sequence is that of Probable 7-dehydrocholesterol reductase (DHCR7) from Acanthamoeba polyphaga (Amoeba).